We begin with the raw amino-acid sequence, 141 residues long: Mite group 2 allergen Lep d 2 (141 aa).

The N-terminal stretch at 1–16 (MMKFIALFALVAVASA) is a signal peptide. 3 cysteine pairs are disulfide-bonded: cysteine 24–cysteine 133, cysteine 37–cysteine 42, and cysteine 88–cysteine 93. Repeat copies occupy residues 64–65 (KV), 68–69 (KV), and 72–73 (KV). Residues 64-73 (KVTIKVLAKV) are 3 X 2 AA repeats of K-V.

This sequence belongs to the NPC2 family. Monomer.

The protein localises to the secreted. The sequence is that of Mite group 2 allergen Lep d 2 from Lepidoglyphus destructor (Storage mite).